The following is a 418-amino-acid chain: Dihydrofolate synthase/folylpolyglutamate synthase (418 aa).

53–56 provides a ligand contact to ATP; sequence GKGT. Ser77 is a binding site for Mg(2+). 116 to 119 serves as a coordination point for 7,8-dihydropteroate; sequence TYFE. A Mg(2+)-binding site is contributed by Glu140. 147–149 is a binding site for 7,8-dihydropteroate; sequence LDA. His167 provides a ligand contact to Mg(2+). Residues Asn252, Arg284, and Asp297 each coordinate ATP.

The protein belongs to the folylpolyglutamate synthase family. In terms of assembly, monomer. Mg(2+) serves as cofactor.

It carries out the reaction 7,8-dihydropteroate + L-glutamate + ATP = 7,8-dihydrofolate + ADP + phosphate + H(+). It catalyses the reaction (6S)-5,6,7,8-tetrahydrofolyl-(gamma-L-Glu)(n) + L-glutamate + ATP = (6S)-5,6,7,8-tetrahydrofolyl-(gamma-L-Glu)(n+1) + ADP + phosphate + H(+). The catalysed reaction is 10-formyltetrahydrofolyl-(gamma-L-Glu)(n) + L-glutamate + ATP = 10-formyltetrahydrofolyl-(gamma-L-Glu)(n+1) + ADP + phosphate + H(+). The enzyme catalyses (6R)-5,10-methylenetetrahydrofolyl-(gamma-L-Glu)(n) + L-glutamate + ATP = (6R)-5,10-methylenetetrahydrofolyl-(gamma-L-Glu)(n+1) + ADP + phosphate + H(+). Its pathway is cofactor biosynthesis; tetrahydrofolate biosynthesis; 7,8-dihydrofolate from 2-amino-4-hydroxy-6-hydroxymethyl-7,8-dihydropteridine diphosphate and 4-aminobenzoate: step 2/2. It participates in cofactor biosynthesis; tetrahydrofolylpolyglutamate biosynthesis. Functions in two distinct reactions of the de novo folate biosynthetic pathway. Catalyzes the addition of a glutamate residue to dihydropteroate (7,8-dihydropteroate or H2Pte) to form dihydrofolate (7,8-dihydrofolate monoglutamate or H2Pte-Glu). Also catalyzes successive additions of L-glutamate to tetrahydrofolate or 10-formyltetrahydrofolate or 5,10-methylenetetrahydrofolate, leading to folylpolyglutamate derivatives. This Buchnera aphidicola subsp. Schizaphis graminum (strain Sg) protein is Dihydrofolate synthase/folylpolyglutamate synthase (folC).